The sequence spans 230 residues: Cytidylate kinase (230 aa).

ATP is bound at residue glycine 16–threonine 24.

This sequence belongs to the cytidylate kinase family. Type 1 subfamily.

The protein localises to the cytoplasm. The catalysed reaction is CMP + ATP = CDP + ADP. The enzyme catalyses dCMP + ATP = dCDP + ADP. This chain is Cytidylate kinase, found in Lactobacillus gasseri (strain ATCC 33323 / DSM 20243 / BCRC 14619 / CIP 102991 / JCM 1131 / KCTC 3163 / NCIMB 11718 / NCTC 13722 / AM63).